We begin with the raw amino-acid sequence, 132 residues long: Translation initiation factor 2 subunit beta (132 aa).

The tract at residues 1 to 30 (MDYEEQLDRAMDEKPDVTGSETRFEVPDPN) is disordered.

It belongs to the eIF-2-beta/eIF-5 family. In terms of assembly, heterotrimer composed of an alpha, a beta and a gamma chain.

In terms of biological role, eIF-2 functions in the early steps of protein synthesis by forming a ternary complex with GTP and initiator tRNA. This Halobacterium salinarum (strain ATCC 29341 / DSM 671 / R1) protein is Translation initiation factor 2 subunit beta.